The following is a 376-amino-acid chain: Protein-glutamate methylesterase/protein-glutamine glutaminase 1 (376 aa).

The 118-residue stretch at Lys4 to Leu121 folds into the Response regulatory domain. Asp55 carries the 4-aspartylphosphate modification. The tract at residues Arg138–Ala174 is disordered. Residues Ala141–Thr158 show a composition bias toward polar residues. The CheB-type methylesterase domain maps to Ser183–Ala376. Residues Ser195, His222, and Asp318 contribute to the active site.

This sequence belongs to the CheB family. Post-translationally, phosphorylated by CheA. Phosphorylation of the N-terminal regulatory domain activates the methylesterase activity.

It is found in the cytoplasm. The catalysed reaction is [protein]-L-glutamate 5-O-methyl ester + H2O = L-glutamyl-[protein] + methanol + H(+). It carries out the reaction L-glutaminyl-[protein] + H2O = L-glutamyl-[protein] + NH4(+). Its function is as follows. Involved in chemotaxis. Part of a chemotaxis signal transduction system that modulates chemotaxis in response to various stimuli. Catalyzes the demethylation of specific methylglutamate residues introduced into the chemoreceptors (methyl-accepting chemotaxis proteins or MCP) by CheR. Also mediates the irreversible deamidation of specific glutamine residues to glutamic acid. The sequence is that of Protein-glutamate methylesterase/protein-glutamine glutaminase 1 from Vibrio vulnificus (strain CMCP6).